The primary structure comprises 74 residues: Exodeoxyribonuclease 7 small subunit (74 aa).

This sequence belongs to the XseB family. Heterooligomer composed of large and small subunits.

It is found in the cytoplasm. The enzyme catalyses Exonucleolytic cleavage in either 5'- to 3'- or 3'- to 5'-direction to yield nucleoside 5'-phosphates.. Bidirectionally degrades single-stranded DNA into large acid-insoluble oligonucleotides, which are then degraded further into small acid-soluble oligonucleotides. The polypeptide is Exodeoxyribonuclease 7 small subunit (Synechococcus elongatus (strain ATCC 33912 / PCC 7942 / FACHB-805) (Anacystis nidulans R2)).